The chain runs to 326 residues: MKTLIEQLPKAELHIHIEGSLEPELMFKLAQRNHQRLSFSSVEEAKQAYQFNDLQSFLNIYYQGANVLYGEEDFYDLTWNYLEKAKKQNICHTEIFFDPQTHTNRGVPFAAIITGITEALKAGKDQLGISSYLILCFLRDLTVESAFETLEQAIKYGEKIKAIGLDSAEKNNPPSKFKEVFDKARAEGFLTVAHAGEEGSSDYIWQAINLLKVSRIDHGIRCIDDPKLVEYLAEKQIPLTVCPLSNVKLKVFNCLEDHNLKILLDQGLCVTINSDDPAYFGGYLNENFLAISQALRLTEIDLQKMINNSFRASFLNTSEKEQLYIQ.

The Zn(2+) site is built by H14, H16, and H194. Residue E197 is the Proton donor of the active site. D275 is a Zn(2+) binding site. D276 provides a ligand contact to substrate.

Belongs to the metallo-dependent hydrolases superfamily. Adenosine and AMP deaminases family. Adenine deaminase type 2 subfamily. Zn(2+) serves as cofactor.

The enzyme catalyses adenine + H2O + H(+) = hypoxanthine + NH4(+). Functionally, catalyzes the hydrolytic deamination of adenine to hypoxanthine. Plays an important role in the purine salvage pathway and in nitrogen catabolism. This chain is Adenine deaminase, found in Crocosphaera subtropica (strain ATCC 51142 / BH68) (Cyanothece sp. (strain ATCC 51142)).